The following is a 975-amino-acid chain: Aminopeptidase N (975 aa).

At 1-11 (MAKGFYISKAL) the chain is on the cytoplasmic side. Residues 12–32 (GILAIVLGIAAVSTIIALSVV) traverse the membrane as a helical; Signal-anchor for type II membrane protein segment. Residues 33-74 (YAQEKNKNAESSPVSSPVSSPVSSPVSPTNPSTTAATTLAQS) form a cytosolic Ser/Thr-rich junction region. Residues 33 to 975 (YAQEKNKNAE…VLQWFRENSQ (943 aa)) lie on the Extracellular side of the membrane. The disordered stretch occupies residues 41–68 (AESSPVSSPVSSPVSSPVSPTNPSTTAA). Over residues 43–59 (SSPVSSPVSSPVSSPVS) the composition is skewed to low complexity. Residues 75 to 975 (KPWNHYRLPK…VLQWFRENSQ (901 aa)) are metalloprotease. Asparagine 134 carries an N-linked (GlcNAc...) asparagine glycan. Tyrosine 182 is modified (sulfotyrosine). N-linked (GlcNAc...) asparagine glycans are attached at residues asparagine 240 and asparagine 271. 358 to 362 (GAMEN) is a binding site for substrate. Position 394 (histidine 394) interacts with Zn(2+). The active-site Proton acceptor is the glutamate 395. Residues histidine 398 and glutamate 417 each contribute to the Zn(2+) site. Sulfotyrosine occurs at positions 425 and 430. Residues asparagine 533, asparagine 580, asparagine 633, asparagine 689, and asparagine 747 are each glycosylated (N-linked (GlcNAc...) asparagine). 2 disulfide bridges follow: cysteine 769-cysteine 776 and cysteine 806-cysteine 842. Asparagine 826 carries N-linked (GlcNAc...) asparagine glycosylation.

The protein belongs to the peptidase M1 family. In terms of assembly, (Microbial infection) Interacts with CCoV spike glycoprotein. Homodimer. Interacts with SLC6A19. Requires Zn(2+) as cofactor. Post-translationally, sulfated. N- and O-glycosylated. In terms of processing, may undergo proteolysis and give rise to a soluble form.

Its subcellular location is the cell membrane. It carries out the reaction Release of an N-terminal amino acid, Xaa-|-Yaa- from a peptide, amide or arylamide. Xaa is preferably Ala, but may be most amino acids including Pro (slow action). When a terminal hydrophobic residue is followed by a prolyl residue, the two may be released as an intact Xaa-Pro dipeptide.. Functionally, broad specificity aminopeptidase which plays a role in the final digestion of peptides generated from hydrolysis of proteins by gastric and pancreatic proteases. Also involved in the processing of various peptides including peptide hormones, such as angiotensin III and IV, neuropeptides, and chemokines. May also be involved the cleavage of peptides bound to major histocompatibility complex class II molecules of antigen presenting cells. May have a role in angiogenesis and promote cholesterol crystallization. May have a role in amino acid transport by acting as binding partner of amino acid transporter SLC6A19 and regulating its activity. Its function is as follows. (Microbial infection) Probable receptor for canine coronavirus (CCoV). The polypeptide is Aminopeptidase N (ANPEP) (Canis lupus familiaris (Dog)).